Reading from the N-terminus, the 423-residue chain is UDP-N-acetylglucosamine 1-carboxyvinyltransferase (423 aa).

Residue 22–23 (KN) participates in phosphoenolpyruvate binding. Arg98 is a binding site for UDP-N-acetyl-alpha-D-glucosamine. The active-site Proton donor is the Cys122. At Cys122 the chain carries 2-(S-cysteinyl)pyruvic acid O-phosphothioketal. Residues 127–131 (RPVDQ), Asp311, and Ile333 contribute to the UDP-N-acetyl-alpha-D-glucosamine site.

Belongs to the EPSP synthase family. MurA subfamily.

It localises to the cytoplasm. The enzyme catalyses phosphoenolpyruvate + UDP-N-acetyl-alpha-D-glucosamine = UDP-N-acetyl-3-O-(1-carboxyvinyl)-alpha-D-glucosamine + phosphate. Its pathway is cell wall biogenesis; peptidoglycan biosynthesis. Functionally, cell wall formation. Adds enolpyruvyl to UDP-N-acetylglucosamine. This Stenotrophomonas maltophilia (strain K279a) protein is UDP-N-acetylglucosamine 1-carboxyvinyltransferase.